Consider the following 230-residue polypeptide: Urease accessory protein UreE (230 aa).

The segment at Leu197 to His230 is disordered. The span at Ser204–His230 shows a compositional bias: basic and acidic residues.

Belongs to the UreE family.

It localises to the cytoplasm. Functionally, involved in urease metallocenter assembly. Binds nickel. Probably functions as a nickel donor during metallocenter assembly. The sequence is that of Urease accessory protein UreE from Yersinia aldovae.